Here is a 504-residue protein sequence, read N- to C-terminus: ATP synthase subunit alpha, chloroplastic (504 aa).

170–177 contributes to the ATP binding site; sequence GDRQTGKT.

Belongs to the ATPase alpha/beta chains family. In terms of assembly, F-type ATPases have 2 components, CF(1) - the catalytic core - and CF(0) - the membrane proton channel. CF(1) has five subunits: alpha(3), beta(3), gamma(1), delta(1), epsilon(1). CF(0) has four main subunits: a, b, b' and c.

The protein localises to the plastid. The protein resides in the chloroplast thylakoid membrane. The catalysed reaction is ATP + H2O + 4 H(+)(in) = ADP + phosphate + 5 H(+)(out). Functionally, produces ATP from ADP in the presence of a proton gradient across the membrane. The alpha chain is a regulatory subunit. In Jasminum nudiflorum (Winter jasmine), this protein is ATP synthase subunit alpha, chloroplastic.